Consider the following 536-residue polypeptide: SNW domain-containing protein 1 (536 aa).

The segment at Met-1 to Tyr-46 is disordered. Position 2 is an N-acetylalanine (Ala-2). Ser-14 carries the phosphoserine modification. Lys-23 participates in a covalent cross-link: Glycyl lysine isopeptide (Lys-Gly) (interchain with G-Cter in SUMO2). Positions Gly-59–Lys-79 are interaction with PPIL1. Glycyl lysine isopeptide (Lys-Gly) (interchain with G-Cter in SUMO2) cross-links involve residues Lys-81, Lys-97, Lys-115, Lys-122, Lys-141, Lys-158, and Lys-170. The SNW stretch occupies residues Ala-174 to Lys-339. Residues Ser-182 and Ser-190 each carry the phosphoserine modification. A Glycyl lysine isopeptide (Lys-Gly) (interchain with G-Cter in SUMO2) cross-link involves residue Lys-193. The tract at residues Pro-209–Ser-234 is disordered. A phosphoserine mark is found at Ser-224, Ser-232, and Ser-234. Glycyl lysine isopeptide (Lys-Gly) (interchain with G-Cter in SUMO2) cross-links involve residues Lys-240, Lys-258, Lys-286, Lys-339, Lys-344, Lys-416, and Lys-441. A disordered region spans residues Lys-311–Arg-386. The residue at position 446 (Ser-446) is a Phosphoserine. Lys-452 participates in a covalent cross-link: Glycyl lysine isopeptide (Lys-Gly) (interchain with G-Cter in SUMO2). 2 stretches are compositionally biased toward basic and acidic residues: residues Thr-469–Glu-489 and Lys-503–Gly-530. A disordered region spans residues Thr-469 to Glu-536. A phosphoserine mark is found at Ser-479 and Ser-481. A Glycyl lysine isopeptide (Lys-Gly) (interchain with G-Cter in SUMO2) cross-link involves residue Lys-509.

This sequence belongs to the SNW family. In terms of assembly, identified in the spliceosome C complex. Associates with U4/U6-U5 tri-small nuclear ribonucleoproteins (U4/U6-U5 tri-snRNPs). Component of the minor spliceosome, which splices U12-type introns. Interacts with SKI, SMAD2,SMAD3, RBPJ, RB1, PABPN1, MAGEA1, SIRT1, FOXN3, U2AF2, PPIL1, DAXX and ATP1B4. Interacts with VDR and RXRA; preferentially associates with VDR:RXRA heterodimers. Interacts with NCOR2. Interacts with MAML1. Interacts with NOTCH1 NICD; the interaction involves multimerized NOTCH1 NICD. Forms a complex with NOTCH1 NICD and MAML1; the association is dissociated by RBPJ. Associates with positive transcription elongation factor b (P-TEFb). Component of the SNARP complex which consists at least of SNIP1, SNW1, THRAP3, BCLAF1 and PNN.

It is found in the nucleus. Its function is as follows. Involved in pre-mRNA splicing as component of the spliceosome. As a component of the minor spliceosome, involved in the splicing of U12-type introns in pre-mRNAs. Required in the specific splicing of CDKN1A pre-mRNA; the function probably involves the recruitment of U2AF2 to the mRNA. May recruit PPIL1 to the spliceosome. May be involved in cyclin-D1/CCND1 mRNA stability through the SNARP complex which associates with both the 3'end of the CCND1 gene and its mRNA. Involved in transcriptional regulation. Modulates TGF-beta-mediated transcription via association with SMAD proteins, MYOD1-mediated transcription via association with PABPN1, RB1-mediated transcriptional repression, and retinoid-X receptor (RXR)- and vitamin D receptor (VDR)-dependent gene transcription in a cell line-specific manner probably involving coactivators NCOA1 and GRIP1. Is involved in NOTCH1-mediated transcriptional activation. Binds to multimerized forms of Notch intracellular domain (NICD) and is proposed to recruit transcriptional coactivators such as MAML1 to form an intermediate preactivation complex which associates with DNA-bound CBF-1/RBPJ to form a transcriptional activation complex by releasing SNW1 and redundant NOTCH1 NICD. The chain is SNW domain-containing protein 1 (SNW1) from Pongo abelii (Sumatran orangutan).